A 214-amino-acid chain; its full sequence is Putative ankyrin repeat protein R844 (214 aa).

5 ANK repeats span residues 41-70 (VEKN…QNKF), 81-110 (SLDK…NVKT), 111-140 (DNNM…DVRA), 142-170 (NDCA…DVTS), and 172-200 (NNFA…DIRA).

The chain is Putative ankyrin repeat protein R844 from Acanthamoeba polyphaga mimivirus (APMV).